Here is a 2026-residue protein sequence, read N- to C-terminus: Fatty acid synthase subunit beta (2026 aa).

Residues 148 to 526 form an acetyltransferase (AT) domain region; that stretch reads ILMAFGGQGS…VDGRGVRIIA (379 aa). Serine 268 (for acetyltransferase activity) is an active-site residue. An enoyl reductase (ER) domain region spans residues 579–824; that stretch reads SQLLQAPPII…LILAAAGVAD (246 aa). The interval 1130–1604 is dehydratase (DH) domain; sequence SQVTGSVRSA…LPGDQLTVRI (475 aa). One can recognise a MaoC-like domain in the interval 1512–1625; the sequence is PGLIDNGSRT…LSVAAYREGT (114 aa). The segment at 1643-2016 is malonyl/palmitoyl transferase (MT/PT) domain; sequence YLFTGQGSQA…LEEAAAVTGS (374 aa). Serine 1788 acts as the For malonyltransferase activity in catalysis.

It belongs to the fungal fatty acid synthetase subunit beta family. As to quaternary structure, [Alpha(6)beta(6)] hexamers of two multifunctional subunits (alpha and beta).

It carries out the reaction acetyl-CoA + n malonyl-CoA + 2n NADPH + 4n H(+) = a long-chain-acyl-CoA + n CoA + n CO2 + 2n NADP(+).. It catalyses the reaction holo-[ACP] + acetyl-CoA = acetyl-[ACP] + CoA. The catalysed reaction is holo-[ACP] + malonyl-CoA = malonyl-[ACP] + CoA. The enzyme catalyses a (3R)-hydroxyacyl-[ACP] = a (2E)-enoyl-[ACP] + H2O. It carries out the reaction a 2,3-saturated acyl-[ACP] + NAD(+) = a (2E)-enoyl-[ACP] + NADH + H(+). It catalyses the reaction (9Z)-octadecenoyl-[ACP] + H2O = (9Z)-octadecenoate + holo-[ACP] + H(+). It participates in secondary metabolite biosynthesis. In terms of biological role, fatty acid synthase beta subunit; part of the gene cluster that mediates the biosynthesis of oryzines, natural products with an unusual maleidride backbone. The two subunits of the fungal fatty acid synthase oryfasA and oryfasB probably form octenoic acid. This fatty acid is most likely activated by the acyl-CoA ligase oryP to give octenyl-CoA before the citrate synthase-like protein oryE catalyzes condensation with oxaloacetate to form tricarboxylic acid. The next steps of the pathways are conjectural, but a favorite possible route has been proposed, beginning with decarboxylation and concomitant dehydration by the decarboxylase oryM, followed by tautomerization, which may lead to the production of a diene intermediate. Reduction of this diene intermediate could give the known metabolite piliformic acid. On the pathway to oryzine B and oryzine A, however, hydroxylation of the diene by the alpha-ketoglutarate-dependent dioxygenase oryG and lactonisation by the lactonohydrolases oryH or oryL could give oryzine B directly. Finally, enoyl reduction by the dehydrogenase oryD would then convert oryzine B into oryzine A. This chain is Fatty acid synthase subunit beta, found in Aspergillus oryzae (strain ATCC 42149 / RIB 40) (Yellow koji mold).